Consider the following 445-residue polypeptide: tRNA modification GTPase MnmE (445 aa).

(6S)-5-formyl-5,6,7,8-tetrahydrofolate contacts are provided by arginine 25, glutamate 83, and lysine 121. Positions 217–371 constitute a TrmE-type G domain; the sequence is GVRVVILGPP…LLTLIQEKSR (155 aa). GTP is bound by residues 227 to 232, 246 to 252, and 271 to 274; these read NAGKST, SEHPGTT, and DTAG. Residues serine 231 and threonine 252 each contribute to the Mg(2+) site. Lysine 445 is a binding site for (6S)-5-formyl-5,6,7,8-tetrahydrofolate.

This sequence belongs to the TRAFAC class TrmE-Era-EngA-EngB-Septin-like GTPase superfamily. TrmE GTPase family. In terms of assembly, homodimer. Heterotetramer of two MnmE and two MnmG subunits. It depends on K(+) as a cofactor.

The protein localises to the cytoplasm. Exhibits a very high intrinsic GTPase hydrolysis rate. Involved in the addition of a carboxymethylaminomethyl (cmnm) group at the wobble position (U34) of certain tRNAs, forming tRNA-cmnm(5)s(2)U34. This is tRNA modification GTPase MnmE from Anaplasma phagocytophilum (strain HZ).